A 215-amino-acid chain; its full sequence is Cytochrome b6 (215 aa).

A helical membrane pass occupies residues 32-52 (IFYCLGGITLTCFLIQFATGF). Position 35 (Cys35) interacts with heme c. His86 and His100 together coordinate heme b. 3 consecutive transmembrane segments (helical) span residues 90–110 (ASMM…TGGF), 116–136 (LTWV…VTGY), and 186–206 (AHTF…FLMI). Residues His187 and His202 each contribute to the heme b site.

This sequence belongs to the cytochrome b family. PetB subfamily. As to quaternary structure, the 4 large subunits of the cytochrome b6-f complex are cytochrome b6, subunit IV (17 kDa polypeptide, PetD), cytochrome f and the Rieske protein, while the 4 small subunits are PetG, PetL, PetM and PetN. The complex functions as a dimer. The cofactor is heme b. Requires heme c as cofactor.

It localises to the cellular thylakoid membrane. In terms of biological role, component of the cytochrome b6-f complex, which mediates electron transfer between photosystem II (PSII) and photosystem I (PSI), cyclic electron flow around PSI, and state transitions. The sequence is that of Cytochrome b6 from Desmonostoc sp. (strain PCC 7906) (Nostoc sp. (strain PCC 7906)).